The sequence spans 447 residues: GTPase Der (447 aa).

EngA-type G domains lie at 3–167 and 181–354; these read PVIA…VQER and VKIA…AAAM. Residues 9 to 16, 56 to 60, 119 to 122, 187 to 194, 234 to 238, and 299 to 302 each bind GTP; these read GRPNVGKS, DTGGF, NKAE, DTAGL, and NKWD. In terms of domain architecture, KH-like spans 355 to 439; the sequence is VKLPTPQLTR…PLRIEFRTNK (85 aa).

It belongs to the TRAFAC class TrmE-Era-EngA-EngB-Septin-like GTPase superfamily. EngA (Der) GTPase family. Associates with the 50S ribosomal subunit.

Its function is as follows. GTPase that plays an essential role in the late steps of ribosome biogenesis. The sequence is that of GTPase Der from Cupriavidus taiwanensis (strain DSM 17343 / BCRC 17206 / CCUG 44338 / CIP 107171 / LMG 19424 / R1) (Ralstonia taiwanensis (strain LMG 19424)).